The chain runs to 558 residues: Cytochrome P450 monooxygenase grgG (558 aa).

Residues 11–31 (PASFIYFPLLILVGHALIFIL) form a helical membrane-spanning segment. C470 contacts heme.

This sequence belongs to the cytochrome P450 family. Requires heme as cofactor.

It localises to the membrane. It participates in secondary metabolite biosynthesis. Cytochrome P450 monooxygenase; part of the gene cluster that mediates the biosynthesis of gregatin A, a fungal polyketide featuring an alkylated furanone core. The PKS grgA synthesizes C11 and C4 polyketide chains in the presence and absence of the trans-enoyl reductase grgB, respectively. The polyketide transferase grgF is then responsible for the fusion of the two carbon chains to produce the furanone skeleton of gregatin A. Next, the cytochrome P450 monooxygenase grgG performs the oxidative cyclization to furnish the gregatin scaffold and leads to the formation of desmethylgregatin A. In this transformation, grgG initially abstracts a hydrogen atom from C-8 to generate a substrate radical, from which one electron is transferred to the iron-heme center to yield a carbocationic species. Heterocyclization along with double-bond isomerizations provides desmethylgregatin A with the furanone ring. Alternatively, grgG might provide hydroxylation at the C-8 radical, which is followed by dehydration to give the cyclized desmethylgregatin A. Finally, the O-methyltransferase grgD methylates the carboxyl group of desmethylgregatin A to provide gregatin A. This Penicillium sp protein is Cytochrome P450 monooxygenase grgG (grgG).